The sequence spans 526 residues: NAD(P)H-quinone oxidoreductase chain 4 2 (526 aa).

14 helical membrane passes run 6-26, 36-56, 91-111, 113-133, 137-157, 169-189, 212-232, 243-263, 275-295, 306-326, 332-352, 375-397, 417-437, and 464-484; these read FPWLSTIILFPIIAALFLPLI, WYALTIGLIDFVIIVTAFYTG, LILLTGFITTLAILAAWPVSF, PKLFYFLMLLMYGGQIAVFAV, LLFFFTWELELVPVYLILSIW, FILYTAGGSLFILIAALTMAF, LLLYGGLLIAYGVKLPIFPLH, TAPAHMLLAGILLKMGGYALL, ALFGPVLVILGVVNIVYAALT, IAYSSISHMGFVLIGMASFTD, AMLQMISHGLIGASLFFMVGA, IFAMWTTCSMASLALPGMSGFVA, VIIVFLAAVGVILTPIYLLSM, and VFVIACLLIPIIGIGLYPKAV.

It belongs to the complex I subunit 4 family.

Its subcellular location is the cellular thylakoid membrane. It catalyses the reaction a plastoquinone + NADH + (n+1) H(+)(in) = a plastoquinol + NAD(+) + n H(+)(out). The enzyme catalyses a plastoquinone + NADPH + (n+1) H(+)(in) = a plastoquinol + NADP(+) + n H(+)(out). Its function is as follows. NDH-1 shuttles electrons from NAD(P)H, via FMN and iron-sulfur (Fe-S) centers, to quinones in the respiratory chain. The immediate electron acceptor for the enzyme in this species is believed to be plastoquinone. Couples the redox reaction to proton translocation (for every two electrons transferred, four hydrogen ions are translocated across the cytoplasmic membrane), and thus conserves the redox energy in a proton gradient. This is NAD(P)H-quinone oxidoreductase chain 4 2 from Picosynechococcus sp. (strain ATCC 27264 / PCC 7002 / PR-6) (Agmenellum quadruplicatum).